A 760-amino-acid polypeptide reads, in one-letter code: uncharacterized protein (760 aa).

The segment covering 578 to 587 (RNRKQSKLRI) has biased composition (basic residues). The interval 578–604 (RNRKQSKLRISKQQEIQPQKEESVKKE) is disordered. Residues 595–604 (PQKEESVKKE) show a composition bias toward basic and acidic residues.

It is found in the mitochondrion. This is an uncharacterized protein from Dictyostelium citrinum (Slime mold).